We begin with the raw amino-acid sequence, 526 residues long: Carotenoid cleavage oxygenase 1 (526 aa).

The tract at residues 1 to 33 (MAEYVFSDAPKDSHGNGVKDAVPGKQPEELPPA) is disordered. Tyr133 and Lys164 together coordinate piceatannol. Trans-resveratrol-binding residues include Tyr133 and Lys164. Fe cation contacts are provided by His197, His248, and His313. Glu383 lines the piceatannol pocket. Glu383 provides a ligand contact to trans-resveratrol. His510 contributes to the Fe cation binding site.

It belongs to the carotenoid oxygenase family. Requires Fe(2+) as cofactor.

It carries out the reaction trans-resveratrol + O2 = 3,5-dihydroxybenzaldehyde + 4-hydroxybenzaldehyde. It catalyses the reaction piceatannol + O2 = 3,5-dihydroxybenzaldehyde + 3,4-dihydroxybenzaldehyde. Functionally, dioxygenase that cleaves the interphenyl C-alpha-C-beta double bond of resveratrol to yield 3,5-dihydroxybenzaldehyde and 4-hydroxybenzaldehyde. Also cleaves piceatannol, a compound that differs from resveratrol only in the occurrence of an additional hydroxyl group, which leads to the production of 3,4-dihydroxybenzaldehyde and 3,5-hydroxybenzaldehyde. Is not able to cleave trans-stilbene, 4-monohydroxy-trans-stilbene, 3,5-dihydroxy-trans-stilbene (pinosylvin), trismethoxy-resveratrol, and 3,3',5-trihydroxy-4'-methoxystilbene-3-O-beta-D-glucoside. Is not involved in carotenoid metabolism. The polypeptide is Carotenoid cleavage oxygenase 1 (Neurospora crassa (strain ATCC 24698 / 74-OR23-1A / CBS 708.71 / DSM 1257 / FGSC 987)).